The sequence spans 796 residues: U-box domain-containing protein 51 (796 aa).

Disordered stretches follow at residues 163-195 (DMDT…SSHQ), 218-240 (TNIG…SLDV), and 270-292 (RSSQ…SSSQ). A compositionally biased stretch (basic and acidic residues) spans 171–181 (ADDRSESRFSS). The span at 182-195 (DSHSGTVSSTSSHQ) shows a compositional bias: low complexity. Residues 270 to 291 (RSSQMEEASSSSTYSDPTSSSS) are compositionally biased toward low complexity. Residues 298-407 (ELEKLKIELR…QRLEDALEGG (110 aa)) adopt a coiled-coil conformation. Residues 429–700 (FSDELKIGVG…DLGKEILPVL (272 aa)) enclose the Protein kinase domain. ATP is bound by residues 435–443 (IGVGGYGSV) and lysine 456. The active-site Proton acceptor is the aspartate 557. Residues 724–796 (NAPTHFYCPI…IKEWRSQLIK (73 aa)) enclose the U-box domain.

This sequence belongs to the protein kinase superfamily. Ser/Thr protein kinase family.

The enzyme catalyses L-seryl-[protein] + ATP = O-phospho-L-seryl-[protein] + ADP + H(+). It catalyses the reaction L-threonyl-[protein] + ATP = O-phospho-L-threonyl-[protein] + ADP + H(+). The catalysed reaction is S-ubiquitinyl-[E2 ubiquitin-conjugating enzyme]-L-cysteine + [acceptor protein]-L-lysine = [E2 ubiquitin-conjugating enzyme]-L-cysteine + N(6)-ubiquitinyl-[acceptor protein]-L-lysine.. Its pathway is protein modification; protein ubiquitination. Functions as an E3 ubiquitin ligase. The polypeptide is U-box domain-containing protein 51 (PUB51) (Arabidopsis thaliana (Mouse-ear cress)).